Reading from the N-terminus, the 153-residue chain is Peptide deformylase (153 aa).

2 residues coordinate Fe cation: Cys-87 and His-129. Residue Glu-130 is part of the active site. His-133 lines the Fe cation pocket.

This sequence belongs to the polypeptide deformylase family. Requires Fe(2+) as cofactor.

The enzyme catalyses N-terminal N-formyl-L-methionyl-[peptide] + H2O = N-terminal L-methionyl-[peptide] + formate. In terms of biological role, removes the formyl group from the N-terminal Met of newly synthesized proteins. Requires at least a dipeptide for an efficient rate of reaction. N-terminal L-methionine is a prerequisite for activity but the enzyme has broad specificity at other positions. The polypeptide is Peptide deformylase (Dictyoglomus thermophilum (strain ATCC 35947 / DSM 3960 / H-6-12)).